The primary structure comprises 156 residues: Small ribosomal subunit protein uS7 (156 aa).

It belongs to the universal ribosomal protein uS7 family. Part of the 30S ribosomal subunit. Contacts proteins S9 and S11.

Functionally, one of the primary rRNA binding proteins, it binds directly to 16S rRNA where it nucleates assembly of the head domain of the 30S subunit. Is located at the subunit interface close to the decoding center, probably blocks exit of the E-site tRNA. This chain is Small ribosomal subunit protein uS7, found in Sinorhizobium medicae (strain WSM419) (Ensifer medicae).